The chain runs to 379 residues: DnaJ homolog subfamily B member 14 (379 aa).

The Cytoplasmic segment spans residues 1–244; it reads MEGNRDEAEK…GHEREEERGD (244 aa). The segment at 55 to 94 is disordered; that stretch reads STAGNSPHCRKPSGSGDQSKPNCTKDSTSGSGEGGKGYTK. A compositionally biased stretch (polar residues) spans 69–84; it reads SGDQSKPNCTKDSTSG. Residues 108–172 form the J domain; that stretch reads NYYEVLGVTK…EKRKQYDLTG (65 aa). The disordered stretch occupies residues 219-241; the sequence is SNGRAGYSQQHQHRHSGHEREEE. The helical transmembrane segment at 245–265 threads the bilayer; sequence GGFSVFIQLMPIIVLILVSLL. At 266–379 the chain is on the lumenal side; it reads SQLMVSNPPY…ERLTSLYKGG (114 aa).

Belongs to the DnaJ family. DNAJB12/DNAJB14 subfamily. As to quaternary structure, interacts (via J domain) with HSPA8/Hsc70. Forms a multiprotein complex, at least composed of DNAJB12, DNAJB14, HSPA8/Hsc70 and SGTA; interaction with DNAJB14 and HSPA8/Hsc70 is direct.

It localises to the endoplasmic reticulum membrane. The protein localises to the nucleus membrane. Its function is as follows. Acts as a co-chaperone with HSPA8/Hsc70; required to promote protein folding and trafficking, prevent aggregation of client proteins, and promote unfolded proteins to endoplasmic reticulum-associated degradation (ERAD) pathway. Acts by determining HSPA8/Hsc70's ATPase and polypeptide-binding activities. Can also act independently of HSPA8/Hsc70: together with DNAJB12, acts as a chaperone that promotes maturation of potassium channels KCND2 and KCNH2 by stabilizing nascent channel subunits and assembling them into tetramers. While stabilization of nascent channel proteins is dependent on HSPA8/Hsc70, the process of oligomerization of channel subunits is independent of HSPA8/Hsc70. When overexpressed, forms membranous structures together with DNAJB12 and HSPA8/Hsc70 within the nucleus; the role of these structures, named DJANGOs, is still unclear. (Microbial infection) In case of infection by polyomavirus, involved in the virus endoplasmic reticulum membrane penetration and infection. The chain is DnaJ homolog subfamily B member 14 from Homo sapiens (Human).